Here is a 112-residue protein sequence, read N- to C-terminus: MYB-like transcription factor ETC2 (112 aa).

The Myb-like domain occupies 41–78 (TEQEEDLISRMYRLVGNRWDLIAGRVVGRKANEIERYW).

Interacts with GL3. As to expression, expressed in stomatal guard mother cells, young stomata and trichomes of young leaves, and inflorescences.

The protein localises to the nucleus. In terms of biological role, MYB-type transcription factor involved in epidermal cell fate specification. Acts as a negative regulator of trichome development, by mediating lateral inhibition. Promotes the formation of hair developing cells in H position in root epidermis, probably by inhibiting non-hair cell formation. The sequence is that of MYB-like transcription factor ETC2 (ETC2) from Arabidopsis thaliana (Mouse-ear cress).